Consider the following 943-residue polypeptide: Translation initiation factor IF-2 (943 aa).

Disordered regions lie at residues 96–229 and 243–352; these read FIKR…ERRR and AAPK…QRQQ. A compositionally biased stretch (low complexity) spans 104-116; that stretch reads DAPSDAAESAPSA. 2 stretches are compositionally biased toward basic and acidic residues: residues 120–163 and 171–229; these read ELVR…EERA and AEKK…ERRR. A compositionally biased stretch (low complexity) spans 278–293; the sequence is ATGSGTGARAAAPSAP. Positions 313 to 323 are enriched in basic and acidic residues; sequence TTKKKEIKTRG. The 170-residue stretch at 443-612 folds into the tr-type G domain; the sequence is SRAPVVTVMG…LLQAEVLELK (170 aa). Residues 452-459 are G1; it reads GHVDHGKT. 452 to 459 serves as a coordination point for GTP; sequence GHVDHGKT. The G2 stretch occupies residues 477–481; that stretch reads GITQH. Residues 498 to 501 form a G3 region; that stretch reads DTPG. Residues 498 to 502 and 552 to 555 each bind GTP; these read DTPGH and TKAD. The interval 552 to 555 is G4; the sequence is TKAD. The G5 stretch occupies residues 588-590; sequence SSK.

This sequence belongs to the TRAFAC class translation factor GTPase superfamily. Classic translation factor GTPase family. IF-2 subfamily.

Its subcellular location is the cytoplasm. Its function is as follows. One of the essential components for the initiation of protein synthesis. Protects formylmethionyl-tRNA from spontaneous hydrolysis and promotes its binding to the 30S ribosomal subunits. Also involved in the hydrolysis of GTP during the formation of the 70S ribosomal complex. In Acidovorax sp. (strain JS42), this protein is Translation initiation factor IF-2.